The chain runs to 107 residues: Phosphoribosyl-ATP pyrophosphatase (107 aa).

It belongs to the PRA-PH family.

It is found in the cytoplasm. The enzyme catalyses 1-(5-phospho-beta-D-ribosyl)-ATP + H2O = 1-(5-phospho-beta-D-ribosyl)-5'-AMP + diphosphate + H(+). Its pathway is amino-acid biosynthesis; L-histidine biosynthesis; L-histidine from 5-phospho-alpha-D-ribose 1-diphosphate: step 2/9. The protein is Phosphoribosyl-ATP pyrophosphatase of Bacillus cereus (strain G9842).